Here is a 335-residue protein sequence, read N- to C-terminus: tRNA N6-adenosine threonylcarbamoyltransferase (335 aa).

His-110 and His-114 together coordinate Fe cation. Substrate-binding positions include 132–136 (LVSGG), Asp-165, Gly-178, and Asn-271. Asp-299 provides a ligand contact to Fe cation.

It belongs to the KAE1 / TsaD family. It depends on Fe(2+) as a cofactor.

It localises to the cytoplasm. It carries out the reaction L-threonylcarbamoyladenylate + adenosine(37) in tRNA = N(6)-L-threonylcarbamoyladenosine(37) in tRNA + AMP + H(+). Functionally, required for the formation of a threonylcarbamoyl group on adenosine at position 37 (t(6)A37) in tRNAs that read codons beginning with adenine. Is involved in the transfer of the threonylcarbamoyl moiety of threonylcarbamoyl-AMP (TC-AMP) to the N6 group of A37, together with TsaE and TsaB. TsaD likely plays a direct catalytic role in this reaction. The sequence is that of tRNA N6-adenosine threonylcarbamoyltransferase from Campylobacter jejuni subsp. jejuni serotype O:6 (strain 81116 / NCTC 11828).